Here is a 277-residue protein sequence, read N- to C-terminus: Thiamine thiazole synthase (277 aa).

NAD(+)-binding positions include Ser36, Gly63, Val126, and 152–154; that span reads HVD. Fe cation is bound by residues Asp154 and His169. NAD(+) is bound at residue Met230. Arg240 contributes to the glycine binding site.

This sequence belongs to the THI4 family. As to quaternary structure, homooctamer; tetramer of dimers. Fe(2+) is required as a cofactor.

The enzyme catalyses hydrogen sulfide + glycine + NAD(+) = ADP-5-ethyl-4-methylthiazole-2-carboxylate + nicotinamide + 3 H2O + H(+). It functions in the pathway cofactor biosynthesis; thiamine diphosphate biosynthesis. Involved in the biosynthesis of the thiazole moiety of thiamine. Catalyzes the conversion of NAD and glycine to adenosine diphosphate 5-(2-hydroxyethyl)-4-methylthiazole-2-carboxylate (ADT), an adenylated thiazole intermediate, using free sulfide as a source of sulfur. This is Thiamine thiazole synthase from Fervidobacterium nodosum (strain ATCC 35602 / DSM 5306 / Rt17-B1).